A 292-amino-acid chain; its full sequence is 4-hydroxy-tetrahydrodipicolinate synthase (292 aa).

A pyruvate-binding site is contributed by threonine 45. The Proton donor/acceptor role is filled by tyrosine 133. Catalysis depends on lysine 162, which acts as the Schiff-base intermediate with substrate. A pyruvate-binding site is contributed by isoleucine 204.

Belongs to the DapA family. In terms of assembly, homotetramer; dimer of dimers.

Its subcellular location is the cytoplasm. The enzyme catalyses L-aspartate 4-semialdehyde + pyruvate = (2S,4S)-4-hydroxy-2,3,4,5-tetrahydrodipicolinate + H2O + H(+). It functions in the pathway amino-acid biosynthesis; L-lysine biosynthesis via DAP pathway; (S)-tetrahydrodipicolinate from L-aspartate: step 3/4. Functionally, catalyzes the condensation of (S)-aspartate-beta-semialdehyde [(S)-ASA] and pyruvate to 4-hydroxy-tetrahydrodipicolinate (HTPA). This is 4-hydroxy-tetrahydrodipicolinate synthase from Oleidesulfovibrio alaskensis (strain ATCC BAA-1058 / DSM 17464 / G20) (Desulfovibrio alaskensis).